A 153-amino-acid chain; its full sequence is Ribosome maturation factor RimP (153 aa).

This sequence belongs to the RimP family.

It is found in the cytoplasm. In terms of biological role, required for maturation of 30S ribosomal subunits. This chain is Ribosome maturation factor RimP, found in Solibacter usitatus (strain Ellin6076).